The chain runs to 525 residues: MVQPADIDVPETPARPVLVVDFGAQYAQLIARRVREARVFSEVIPHTASIEEIRARQPVALVLSGGPASVYADGAPKLDPALLDLGVPVLGICYGFQAMAQALGGIVAHTGTREYGRTELKVLGGKLHSDLPEVQPVWMSHGDAVTAAPDGFDVVASSAGAPVAAFEAFDRRLAGVQYHPEVMHTPHGQQVLSRFLHDFAGLGAQWTPANIANALIEQVRTQIGDGHAICGLSGGVDSAVAAALVQRAIGDRLTCVFVDHGLLRAGERAQVQRDFVAATGANLVTVDAAETFLEALSGVSAPEGKRKIIGRQFIRAFEGAVRDVLDGKTAEFLVQGTLYPDVVESGGGSGTANIKSHHNVGGLPDDLKFTLVEPLRLLFKDEVRAVGRELGLPEEIVARQPFPGPGLGIRIVGEVTAKRLDTLRHADSIVREELTAAGLDNQIWQCPVVLLADVRSVGVQGDGRTYGHPIVLRPVSSEDAMTADWTRVPYEVLERISTRITNEVAEVNRVVLDITSKPPATIEWE.

Positions P16–Q205 constitute a Glutamine amidotransferase type-1 domain. C93 (nucleophile) is an active-site residue. Catalysis depends on residues H179 and E181. The 194-residue stretch at W206–R399 folds into the GMPS ATP-PPase domain. ATP is bound at residue S233–A239.

In terms of assembly, homodimer.

It catalyses the reaction XMP + L-glutamine + ATP + H2O = GMP + L-glutamate + AMP + diphosphate + 2 H(+). The protein operates within purine metabolism; GMP biosynthesis; GMP from XMP (L-Gln route): step 1/1. In terms of biological role, catalyzes the synthesis of GMP from XMP. The sequence is that of GMP synthase [glutamine-hydrolyzing] from Mycobacterium bovis (strain BCG / Pasteur 1173P2).